Consider the following 677-residue polypeptide: DNA ligase (677 aa).

Residues 35-39 (DAEFD), 85-86 (SL), and glutamate 110 each bind NAD(+). Catalysis depends on lysine 112, which acts as the N6-AMP-lysine intermediate. NAD(+) contacts are provided by arginine 133 and glutamate 173. Positions 189–210 (QKEGGKPFANPRNAAAGSLRQK) are disordered. Residues lysine 289 and lysine 313 each contribute to the NAD(+) site. Zn(2+) contacts are provided by cysteine 407, cysteine 410, cysteine 426, and cysteine 432. In terms of domain architecture, BRCT spans 596 to 677 (IPDQVLEGLT…FKQLLANGTV (82 aa)).

Belongs to the NAD-dependent DNA ligase family. LigA subfamily. Requires Mg(2+) as cofactor. The cofactor is Mn(2+).

The catalysed reaction is NAD(+) + (deoxyribonucleotide)n-3'-hydroxyl + 5'-phospho-(deoxyribonucleotide)m = (deoxyribonucleotide)n+m + AMP + beta-nicotinamide D-nucleotide.. In terms of biological role, DNA ligase that catalyzes the formation of phosphodiester linkages between 5'-phosphoryl and 3'-hydroxyl groups in double-stranded DNA using NAD as a coenzyme and as the energy source for the reaction. It is essential for DNA replication and repair of damaged DNA. In Corynebacterium diphtheriae (strain ATCC 700971 / NCTC 13129 / Biotype gravis), this protein is DNA ligase.